The following is a 334-amino-acid chain: Ornithine carbamoyltransferase (334 aa).

Residues 57–60 (STRT), Gln-84, Arg-108, and 135–138 (HPTQ) contribute to the carbamoyl phosphate site. Residues Asn-169, Asp-233, and 237 to 238 (SM) contribute to the L-ornithine site. Residues 275–276 (CL) and Arg-320 each bind carbamoyl phosphate.

It belongs to the aspartate/ornithine carbamoyltransferase superfamily. OTCase family. Homotrimer.

It localises to the cytoplasm. The enzyme catalyses carbamoyl phosphate + L-ornithine = L-citrulline + phosphate + H(+). It functions in the pathway amino-acid biosynthesis; L-arginine biosynthesis; L-arginine from L-ornithine and carbamoyl phosphate: step 1/3. Reversibly catalyzes the transfer of the carbamoyl group from carbamoyl phosphate (CP) to the N(epsilon) atom of ornithine (ORN) to produce L-citrulline. The polypeptide is Ornithine carbamoyltransferase (Vibrio vulnificus (strain CMCP6)).